The following is a 177-amino-acid chain: Large ribosomal subunit protein uL6 (177 aa).

The protein belongs to the universal ribosomal protein uL6 family. As to quaternary structure, part of the 50S ribosomal subunit.

This protein binds to the 23S rRNA, and is important in its secondary structure. It is located near the subunit interface in the base of the L7/L12 stalk, and near the tRNA binding site of the peptidyltransferase center. This is Large ribosomal subunit protein uL6 from Erythrobacter litoralis (strain HTCC2594).